A 309-amino-acid chain; its full sequence is 4-hydroxy-3-methylbut-2-enyl diphosphate reductase (309 aa).

[4Fe-4S] cluster is bound at residue Cys-12. (2E)-4-hydroxy-3-methylbut-2-enyl diphosphate is bound by residues His-43 and His-77. Positions 43 and 77 each coordinate dimethylallyl diphosphate. 2 residues coordinate isopentenyl diphosphate: His-43 and His-77. Cys-99 contacts [4Fe-4S] cluster. His-127 serves as a coordination point for (2E)-4-hydroxy-3-methylbut-2-enyl diphosphate. A dimethylallyl diphosphate-binding site is contributed by His-127. Isopentenyl diphosphate is bound at residue His-127. The Proton donor role is filled by Glu-129. Residue Thr-167 coordinates (2E)-4-hydroxy-3-methylbut-2-enyl diphosphate. A [4Fe-4S] cluster-binding site is contributed by Cys-197. The (2E)-4-hydroxy-3-methylbut-2-enyl diphosphate site is built by Ser-225, Ser-226, Asn-227, and Ser-269. The dimethylallyl diphosphate site is built by Ser-225, Ser-226, Asn-227, and Ser-269. Isopentenyl diphosphate contacts are provided by Ser-225, Ser-226, Asn-227, and Ser-269.

It belongs to the IspH family. The cofactor is [4Fe-4S] cluster.

The enzyme catalyses isopentenyl diphosphate + 2 oxidized [2Fe-2S]-[ferredoxin] + H2O = (2E)-4-hydroxy-3-methylbut-2-enyl diphosphate + 2 reduced [2Fe-2S]-[ferredoxin] + 2 H(+). It catalyses the reaction dimethylallyl diphosphate + 2 oxidized [2Fe-2S]-[ferredoxin] + H2O = (2E)-4-hydroxy-3-methylbut-2-enyl diphosphate + 2 reduced [2Fe-2S]-[ferredoxin] + 2 H(+). It participates in isoprenoid biosynthesis; dimethylallyl diphosphate biosynthesis; dimethylallyl diphosphate from (2E)-4-hydroxy-3-methylbutenyl diphosphate: step 1/1. Its pathway is isoprenoid biosynthesis; isopentenyl diphosphate biosynthesis via DXP pathway; isopentenyl diphosphate from 1-deoxy-D-xylulose 5-phosphate: step 6/6. Functionally, catalyzes the conversion of 1-hydroxy-2-methyl-2-(E)-butenyl 4-diphosphate (HMBPP) into a mixture of isopentenyl diphosphate (IPP) and dimethylallyl diphosphate (DMAPP). Acts in the terminal step of the DOXP/MEP pathway for isoprenoid precursor biosynthesis. This chain is 4-hydroxy-3-methylbut-2-enyl diphosphate reductase, found in Wolbachia sp. subsp. Brugia malayi (strain TRS).